The sequence spans 159 residues: Phosphopantetheine adenylyltransferase (159 aa).

T10 contacts substrate. ATP contacts are provided by residues 10 to 11 (TF) and H18. Substrate-binding residues include K42, L74, and R88. ATP contacts are provided by residues 89-91 (GLR), E99, and 124-130 (YSFISSS).

Belongs to the bacterial CoaD family. As to quaternary structure, homohexamer. Requires Mg(2+) as cofactor.

The protein localises to the cytoplasm. The catalysed reaction is (R)-4'-phosphopantetheine + ATP + H(+) = 3'-dephospho-CoA + diphosphate. It functions in the pathway cofactor biosynthesis; coenzyme A biosynthesis; CoA from (R)-pantothenate: step 4/5. Reversibly transfers an adenylyl group from ATP to 4'-phosphopantetheine, yielding dephospho-CoA (dPCoA) and pyrophosphate. In Campylobacter hominis (strain ATCC BAA-381 / DSM 21671 / CCUG 45161 / LMG 19568 / NCTC 13146 / CH001A), this protein is Phosphopantetheine adenylyltransferase.